The following is a 79-amino-acid chain: CDC42 small effector protein 1 (79 aa).

2 S-palmitoyl cysteine lipidation sites follow: C10 and C11. Residues 30–43 (IGEPMNFVHLTHIG) form the CRIB domain. The disordered stretch occupies residues 41 to 79 (HIGSGDMGASDGLPRAGGVQEQMRSKCGRDRQWSNSGVL). Residues 63-72 (MRSKCGRDRQ) show a composition bias toward basic and acidic residues.

This sequence belongs to the CDC42SE/SPEC family.

The protein localises to the cytoplasm. The protein resides in the cytoskeleton. It is found in the cell membrane. Its function is as follows. Probably involved in the organization of the actin cytoskeleton by acting downstream of CDC42, inducing actin filament assembly. This Xenopus tropicalis (Western clawed frog) protein is CDC42 small effector protein 1 (cdc42se1).